Reading from the N-terminus, the 829-residue chain is pre-rRNA 2'-O-ribose RNA methyltransferase FTSJ3 (829 aa).

5 residues coordinate S-adenosyl-L-methionine: Gly56, Trp58, Asp76, Asp92, and Asp117. Lys157 functions as the Proton acceptor in the catalytic mechanism. Positions 332 to 367 (ISLSSEEEGDEEESAAETKQASEEEEEREEEEQLNR) are disordered. Phosphoserine is present on residues Ser333, Ser335, Ser336, Ser345, and Ser353. Acidic residues predominate over residues 336–346 (SEEEGDEEESA). Residues 354–363 (EEEEEREEEE) are compositionally biased toward acidic residues. Arg389 is modified (citrulline). Disordered regions lie at residues 443 to 508 (FLSD…PLLV) and 528 to 634 (DGFS…GFEV). The segment covering 456–473 (DAEDDDDTSLESDLDPEE) has biased composition (acidic residues). Ser531 and Ser544 each carry phosphoserine. Residue Lys570 forms a Glycyl lysine isopeptide (Lys-Gly) (interchain with G-Cter in SUMO2) linkage. At Ser575 the chain carries Phosphoserine. Glycyl lysine isopeptide (Lys-Gly) (interchain with G-Cter in SUMO2) cross-links involve residues Lys626 and Lys642. Ser659 is subject to Phosphoserine. Lys661 is covalently cross-linked (Glycyl lysine isopeptide (Lys-Gly) (interchain with G-Cter in SUMO2)). Ser671 carries the post-translational modification Phosphoserine. Lys693 participates in a covalent cross-link: Glycyl lysine isopeptide (Lys-Gly) (interchain with G-Cter in SUMO2). A coiled-coil region spans residues 722–760 (IKKVAEAKARKKRRMLKKLEQTKKKAEAVVNTVDISERE). A Citrulline modification is found at Arg766. Basic residues predominate over residues 794–804 (VRRPAGVRGHF). Residues 794 to 829 (VRRPAGVRGHFKVVDSRMKKDQRAQRKEQKRNHRRK) form a disordered region. Over residues 805–820 (KVVDSRMKKDQRAQRK) the composition is skewed to basic and acidic residues.

The protein belongs to the class I-like SAM-binding methyltransferase superfamily. RNA methyltransferase RlmE family. SPB1 subfamily. In terms of assembly, interacts with NIP7. In terms of processing, citrullinated by PADI4.

The protein resides in the nucleus. The protein localises to the nucleolus. It catalyses the reaction a ribonucleotide in rRNA + S-adenosyl-L-methionine = a 2'-O-methylribonucleotide in rRNA + S-adenosyl-L-homocysteine + H(+). Functionally, RNA 2'-O-methyltransferase involved in the processing of the 34S pre-rRNA to 18S rRNA and in 40S ribosomal subunit formation. This Rattus norvegicus (Rat) protein is pre-rRNA 2'-O-ribose RNA methyltransferase FTSJ3 (Ftsj3).